The chain runs to 244 residues: Gamma-gliadin (244 aa).

Residues 18 to 64 (QQPFLQQPQQPSPQPQQVVQIISPATPTTIPSAGKPTSAPFPQQQQQ) form a disordered region. The segment covering 35 to 48 (VVQIISPATPTTIP) has biased composition (polar residues).

The protein belongs to the gliadin/glutenin family.

In terms of biological role, gliadin is the major seed storage protein in wheat. This is Gamma-gliadin from Triticum aestivum (Wheat).